Reading from the N-terminus, the 220-residue chain is Photosynthetic NDH subunit of lumenal location 3, chloroplastic (220 aa).

The N-terminal 35 residues, 1-35 (MAHFIDLNSLTNTLPSLPKLPESRKTGKSSGFACR), are a transit peptide targeting the chloroplast. The N-terminal 42 residues, 36–77 (RTEEFQEPDSVQITRRMTLGFAVSIGLTGILGENNVSLAQDN), are a transit peptide targeting the thylakoid.

The protein belongs to the PsbQ family. In terms of assembly, part of the chloroplast NDH complex, composed of a mixture of chloroplast and nucleus encoded subunits. Component of the NDH lumenal subcomplex, at least composed of PnsL1, PnsL2, PnsL3, PnsL4 and PnsL5.

It is found in the plastid. The protein localises to the chloroplast thylakoid membrane. NDH shuttles electrons from NAD(P)H:plastoquinone, via FMN and iron-sulfur (Fe-S) centers, to quinones in the photosynthetic chain and possibly in a chloroplast respiratory chain. The immediate electron acceptor for the enzyme in this species is believed to be plastoquinone. Couples the redox reaction to proton translocation, and thus conserves the redox energy in a proton gradient. Required for both formation and activity of the chloroplast NAD(P)H dehydrogenase (NDH) complex. The sequence is that of Photosynthetic NDH subunit of lumenal location 3, chloroplastic from Arabidopsis thaliana (Mouse-ear cress).